Reading from the N-terminus, the 415-residue chain is MTTRTPPSGWISRLAQGSLVKQILIGLVLGVLLALVSKPAAIAVGLLGTLFVGALKAVAPVLVLMLVMASIANHQHGQKTSIRPILFLYLLGTFSAALTAVLFSFVFPSTLHLTTAADSITPPSGIVEVLRGLLMSMVSNPIDALLNANYIGILVWAVGLGFALRHGNDTTKNLINDVSHAVTFIVKVVIRFAPLGIFGLVSSTLATTGFETLWGYAQLLLVLVGCMLLVALVINPLLVFWKIRRNPYPLVLTCLRESGVYAFFTRSSAANIPVNMALCEKLNLDRDTYSVSIPLGATINMAGAAITITVLTLAAVHTLNIPVDLPTALLLSVVASLCACGASGVAGGSLLLIPLACNMFGIPNDVAMQVVAVGFIIGVLQDSCETALNSSTDALFTAAACIAEDDQLAKNALRS.

8 helical membrane passes run 23-43 (ILIG…AAIA), 47-67 (LGTL…LMLV), 85-105 (ILFL…LFSF), 144-164 (ALLN…GFAL), 181-201 (AVTF…FGLV), 220-240 (LLVL…LLVF), 293-313 (IPLG…VLTL), and 333-353 (VVAS…LLLI).

Belongs to the dicarboxylate/amino acid:cation symporter (DAACS) (TC 2.A.23) family.

The protein resides in the cell inner membrane. It catalyses the reaction L-serine(in) + Na(+)(in) = L-serine(out) + Na(+)(out). It carries out the reaction L-threonine(in) + Na(+)(in) = L-threonine(out) + Na(+)(out). Its function is as follows. Involved in the import of serine and threonine into the cell, with the concomitant import of sodium (symport system). The chain is Serine/threonine transporter SstT from Klebsiella pneumoniae (strain 342).